The primary structure comprises 95 residues: MSVDLATVKRVAKLARIAVSEDEANRMVGELNGILGFVEQLSEVNVDGVEAMTSVTPMAMKKRADEVTDGNKAADIVANAPVTDHNFFLVPKVVE.

It belongs to the GatC family. As to quaternary structure, heterotrimer of A, B and C subunits.

The catalysed reaction is L-glutamyl-tRNA(Gln) + L-glutamine + ATP + H2O = L-glutaminyl-tRNA(Gln) + L-glutamate + ADP + phosphate + H(+). The enzyme catalyses L-aspartyl-tRNA(Asn) + L-glutamine + ATP + H2O = L-asparaginyl-tRNA(Asn) + L-glutamate + ADP + phosphate + 2 H(+). Allows the formation of correctly charged Asn-tRNA(Asn) or Gln-tRNA(Gln) through the transamidation of misacylated Asp-tRNA(Asn) or Glu-tRNA(Gln) in organisms which lack either or both of asparaginyl-tRNA or glutaminyl-tRNA synthetases. The reaction takes place in the presence of glutamine and ATP through an activated phospho-Asp-tRNA(Asn) or phospho-Glu-tRNA(Gln). This Rhizobium etli (strain ATCC 51251 / DSM 11541 / JCM 21823 / NBRC 15573 / CFN 42) protein is Aspartyl/glutamyl-tRNA(Asn/Gln) amidotransferase subunit C.